The primary structure comprises 122 residues: Large ribosomal subunit protein uL14 (122 aa).

The protein belongs to the universal ribosomal protein uL14 family. Part of the 50S ribosomal subunit. Forms a cluster with proteins L3 and L19. In the 70S ribosome, L14 and L19 interact and together make contacts with the 16S rRNA in bridges B5 and B8.

Functionally, binds to 23S rRNA. Forms part of two intersubunit bridges in the 70S ribosome. This is Large ribosomal subunit protein uL14 from Rickettsia felis (strain ATCC VR-1525 / URRWXCal2) (Rickettsia azadi).